The primary structure comprises 260 residues: MLQPVWSCILALLGVFIFHVGEVRSQCWESNKCTDLSSEDGILECIKACKMDLSAESPVFPGNGHMQPLSENIRKYVMSHFRWNKFGRRNSTSNDNNNGGYKREDIANYPILNLLTGSDNQNTQQGIMEDEAVDRQDSKRSYSMEHFRWGKPVGKKRRPIKVFPTDAEEESSEIFPLELRRELSLEFDYPDTNSEEDLDDGELLDGPVKKDRKYKMHHFRWEGPPKDKRYGGFMTPERSQTPLMTLFKNAIIKNAHKKGQ.

Residues 1–25 form the signal peptide; it reads MLQPVWSCILALLGVFIFHVGEVRS. Residue Q26 is modified to Pyrrolidone carboxylic acid. At F86 the chain carries Phenylalanine amide. N90 is a glycosylation site (N-linked (GlcNAc...) asparagine). A propeptide spanning residues 104–138 is cleaved from the precursor; sequence EDIANYPILNLLTGSDNQNTQQGIMEDEAVDRQDS. Residue V153 is modified to Valine amide.

It belongs to the POMC family. In terms of processing, specific enzymatic cleavages at paired basic residues yield the different active peptides.

The protein resides in the secreted. In terms of biological role, stimulates the adrenal glands to release cortisol. Functionally, anorexigenic peptide. Increases the pigmentation of skin by increasing melanin production in melanocytes. Its function is as follows. Increases the pigmentation of skin by increasing melanin production in melanocytes. Endogenous orexigenic opiate. In terms of biological role, endogenous opiate. The sequence is that of Pro-opiomelanocortin (pomc) from Pelophylax ridibundus (Marsh frog).